The chain runs to 66 residues: Large ribosomal subunit protein uL29 (66 aa).

The protein belongs to the universal ribosomal protein uL29 family.

This Thermoplasma volcanium (strain ATCC 51530 / DSM 4299 / JCM 9571 / NBRC 15438 / GSS1) protein is Large ribosomal subunit protein uL29.